The sequence spans 492 residues: Glutamyl-tRNA(Gln) amidotransferase subunit A (492 aa).

Catalysis depends on charge relay system residues Lys78 and Ser158. Ser182 serves as the catalytic Acyl-ester intermediate.

The protein belongs to the amidase family. GatA subfamily. As to quaternary structure, heterotrimer of A, B and C subunits.

The catalysed reaction is L-glutamyl-tRNA(Gln) + L-glutamine + ATP + H2O = L-glutaminyl-tRNA(Gln) + L-glutamate + ADP + phosphate + H(+). Allows the formation of correctly charged Gln-tRNA(Gln) through the transamidation of misacylated Glu-tRNA(Gln) in organisms which lack glutaminyl-tRNA synthetase. The reaction takes place in the presence of glutamine and ATP through an activated gamma-phospho-Glu-tRNA(Gln). In Rhodopseudomonas palustris (strain BisB18), this protein is Glutamyl-tRNA(Gln) amidotransferase subunit A.